The chain runs to 154 residues: Ribonuclease H (154 aa).

The RNase H type-1 domain occupies 5–147 (GKSRVAIYTD…ADMLARGEVE (143 aa)). Mg(2+) contacts are provided by Asp14, Glu53, Asp75, and Asp139.

It belongs to the RNase H family. As to quaternary structure, monomer. The cofactor is Mg(2+).

Its subcellular location is the cytoplasm. It carries out the reaction Endonucleolytic cleavage to 5'-phosphomonoester.. Endonuclease that specifically degrades the RNA of RNA-DNA hybrids. The polypeptide is Ribonuclease H (Anaplasma marginale (strain St. Maries)).